Reading from the N-terminus, the 239-residue chain is Chlorate reductase subunit gamma (239 aa).

An N-terminal signal peptide occupies residues 1-27; the sequence is MKTNILVKRMAVIGLAVAAACTGAAAA. Heme b is bound by residues H74 and M138.

In terms of assembly, heterotrimer of alpha, beta and gamma subunits. Requires heme b as cofactor.

Its subcellular location is the periplasm. In terms of biological role, may transfer electrons to the iron-sulfur centers of ClrB. The protein is Chlorate reductase subunit gamma (clrC) of Ideonella dechloratans.